A 362-amino-acid polypeptide reads, in one-letter code: NAD(P)H-quinone oxidoreductase subunit 1, chloroplastic (362 aa).

The next 8 membrane-spanning stretches (helical) occupy residues 29 to 49 (ILPI…IVWL), 103 to 123 (IAVI…HFVL), 128 to 148 (IGVF…LMAG), 164 to 184 (AAQS…ISLL), 202 to 222 (FFGW…ISSL), 247 to 267 (YSGI…LVSS), 303 to 323 (TIGI…SITI), and 335 to 355 (LLNL…LLTT).

It belongs to the complex I subunit 1 family. NDH is composed of at least 16 different subunits, 5 of which are encoded in the nucleus.

Its subcellular location is the plastid. It is found in the chloroplast thylakoid membrane. It catalyses the reaction a plastoquinone + NADH + (n+1) H(+)(in) = a plastoquinol + NAD(+) + n H(+)(out). It carries out the reaction a plastoquinone + NADPH + (n+1) H(+)(in) = a plastoquinol + NADP(+) + n H(+)(out). Its function is as follows. NDH shuttles electrons from NAD(P)H:plastoquinone, via FMN and iron-sulfur (Fe-S) centers, to quinones in the photosynthetic chain and possibly in a chloroplast respiratory chain. The immediate electron acceptor for the enzyme in this species is believed to be plastoquinone. Couples the redox reaction to proton translocation, and thus conserves the redox energy in a proton gradient. This Agrostis stolonifera (Creeping bentgrass) protein is NAD(P)H-quinone oxidoreductase subunit 1, chloroplastic.